The sequence spans 110 residues: Multidrug transporter PA4990 (110 aa).

4 helical membrane-spanning segments follow: residues 7 to 27, 31 to 51, 58 to 78, and 85 to 105; these read LAIAIAAEVVATTSLKAVAGF, LPLLLVVGGYVLAFSMLVLVM, VVYAIWSGLGIVLVSLVAMFV, and PAALLGIGLIIAGVLVIQLFS.

The protein belongs to the drug/metabolite transporter (DMT) superfamily. Small multidrug resistance (SMR) (TC 2.A.7.1) family.

The protein resides in the cell membrane. Functionally, confers resistance to ethidium bromide, acriflavine and methyl viologen. This chain is Multidrug transporter PA4990, found in Pseudomonas aeruginosa (strain ATCC 15692 / DSM 22644 / CIP 104116 / JCM 14847 / LMG 12228 / 1C / PRS 101 / PAO1).